Here is a 111-residue protein sequence, read N- to C-terminus: uncharacterized protein (111 aa).

This is an uncharacterized protein from Bacillus subtilis (strain 168).